Reading from the N-terminus, the 677-residue chain is UvrABC system protein B (677 aa).

A Helicase ATP-binding domain is found at 27-192 (ANLGQGVRDQ…QRNDFDFHRG (166 aa)). 40–47 (GVTGSGKT) lines the ATP pocket. A Beta-hairpin motif is present at residues 93-116 (YYDYYQPEAYVPASDTYIEKDSSI). In terms of domain architecture, Helicase C-terminal spans 432-594 (QVDDLLAECR…IEPRTIRKSL (163 aa)). The UVR domain occupies 638–673 (AKHIQKLEREMREAAKELEFERAATLRDRIRLLRER).

It belongs to the UvrB family. As to quaternary structure, forms a heterotetramer with UvrA during the search for lesions. Interacts with UvrC in an incision complex.

It localises to the cytoplasm. The UvrABC repair system catalyzes the recognition and processing of DNA lesions. A damage recognition complex composed of 2 UvrA and 2 UvrB subunits scans DNA for abnormalities. Upon binding of the UvrA(2)B(2) complex to a putative damaged site, the DNA wraps around one UvrB monomer. DNA wrap is dependent on ATP binding by UvrB and probably causes local melting of the DNA helix, facilitating insertion of UvrB beta-hairpin between the DNA strands. Then UvrB probes one DNA strand for the presence of a lesion. If a lesion is found the UvrA subunits dissociate and the UvrB-DNA preincision complex is formed. This complex is subsequently bound by UvrC and the second UvrB is released. If no lesion is found, the DNA wraps around the other UvrB subunit that will check the other stand for damage. This chain is UvrABC system protein B, found in Nitratidesulfovibrio vulgaris (strain DP4) (Desulfovibrio vulgaris).